Here is a 346-residue protein sequence, read N- to C-terminus: Biotin synthase (346 aa).

In terms of domain architecture, Radical SAM core spans 38–256 (RQVQVSTLLS…IAVARIMMPT (219 aa)). The [4Fe-4S] cluster site is built by Cys53, Cys57, and Cys60. Residues Cys97, Cys128, Cys188, and Arg260 each coordinate [2Fe-2S] cluster.

This sequence belongs to the radical SAM superfamily. Biotin synthase family. In terms of assembly, homodimer. The cofactor is [4Fe-4S] cluster. Requires [2Fe-2S] cluster as cofactor.

The catalysed reaction is (4R,5S)-dethiobiotin + (sulfur carrier)-SH + 2 reduced [2Fe-2S]-[ferredoxin] + 2 S-adenosyl-L-methionine = (sulfur carrier)-H + biotin + 2 5'-deoxyadenosine + 2 L-methionine + 2 oxidized [2Fe-2S]-[ferredoxin]. Its pathway is cofactor biosynthesis; biotin biosynthesis; biotin from 7,8-diaminononanoate: step 2/2. Its function is as follows. Catalyzes the conversion of dethiobiotin (DTB) to biotin by the insertion of a sulfur atom into dethiobiotin via a radical-based mechanism. The sequence is that of Biotin synthase from Shigella dysenteriae serotype 1 (strain Sd197).